The primary structure comprises 527 residues: Butyrophilin subfamily 2 member A1 (527 aa).

The signal sequence occupies residues 1 to 28 (MESAAALHFSRPASLLLLLLSLCALVSA). Residues 29-141 (QFIVVGPTDP…SYDEAILHLV (113 aa)) form the Ig-like V-type domain. The Extracellular segment spans residues 29–248 (QFIVVGPTDP…SFMPSVSPCA (220 aa)). N-linked (GlcNAc...) asparagine glycosylation is found at Asn46, Asn114, and Asn120. Cysteines 51 and 125 form a disulfide. A helical membrane pass occupies residues 249–269 (VALPIIVVILMIPIAVCIYWI). Topologically, residues 270–527 (NKLQKEKKIL…LHRVGTHQSL (258 aa)) are cytoplasmic. Residues 310-506 (VKEKLQEELR…IFICPALTGA (197 aa)) enclose the B30.2/SPRY domain.

It belongs to the immunoglobulin superfamily. BTN/MOG family. In terms of tissue distribution, highly expressed in brain, bone marrow, small intestine, muscle, spleen and pancreas. Moderate expression was seen in lung, liver and kidney.

It localises to the membrane. This chain is Butyrophilin subfamily 2 member A1 (BTN2A1), found in Homo sapiens (Human).